The following is a 78-amino-acid chain: Large ribosomal subunit protein bL28 (78 aa).

The segment at Met-1–Asn-23 is disordered. The span at Arg-11–Asn-22 shows a compositional bias: polar residues.

Belongs to the bacterial ribosomal protein bL28 family.

The chain is Large ribosomal subunit protein bL28 from Stenotrophomonas maltophilia (strain R551-3).